The following is a 43-amino-acid chain: Protein PsbN (43 aa).

The chain crosses the membrane as a helical span at residues threonine 5–phenylalanine 27.

It belongs to the PsbN family.

Its subcellular location is the plastid. It is found in the chloroplast thylakoid membrane. In terms of biological role, may play a role in photosystem I and II biogenesis. The chain is Protein PsbN from Cicer arietinum (Chickpea).